A 2572-amino-acid polypeptide reads, in one-letter code: Zinc finger homeobox protein 2 (2572 aa).

Disordered stretches follow at residues 1–107 (MATL…GLPP) and 343–425 (LSPP…ADDY). The span at 8–36 (STTGTTPSPGHNAPSLPSDTFSSSTPSDP) shows a compositional bias: low complexity. 2 stretches are compositionally biased toward polar residues: residues 44–53 (ASSTSENMRS) and 389–398 (LNQSSPTSKE). C2H2-type zinc fingers lie at residues 453–476 (LKCP…REKH) and 508–532 (YRCD…SDKH). Disordered regions lie at residues 537–566 (QGFQ…PKTK), 608–655 (LPPG…LRPD), and 675–710 (RKFP…SPPP). Positions 615 to 628 (PGPPPPPGATPTSP) are enriched in pro residues. The span at 696-705 (LLGSSSDSLP) shows a compositional bias: low complexity. 2 consecutive C2H2-type zinc fingers follow at residues 821-845 (LRCN…GAAH) and 870-894 (YHCL…TPAH). The tract at residues 929–974 (QLRTPGKAPVTPLAEPPTPEKDAQNKTEQLASEETENKTGPSRDSA) is disordered. Residues 954–974 (KTEQLASEETENKTGPSRDSA) are compositionally biased toward polar residues. The C2H2-type 5 zinc-finger motif lies at 1009 to 1032 (YRCPLCQEQLVGRPALHFHLSHLH). The tract at residues 1061–1171 (PTLSPLDNGQ…PAPADSRHPL (111 aa)) is disordered. Residues 1120–1132 (GQPPSPAPSPVPE) are compositionally biased toward pro residues. 2 C2H2-type zinc fingers span residues 1191–1217 (YKCT…SHLH) and 1248–1272 (FKCT…SVLH). Disordered stretches follow at residues 1269-1325 (SVLH…FLSP), 1389-1408 (LPAA…LAER), and 1415-1434 (MAKE…LPNE). A compositionally biased stretch (basic and acidic residues) spans 1279 to 1311 (TKTDSKIEGPERSQEEPKEGETEGEVGTEKKGP). Positions 1392 to 1401 (ATPPPPPQPP) are enriched in pro residues. The C2H2-type 8 zinc-finger motif lies at 1480 to 1503 (LACGACGKLFSNMLILKTHEEHVH). Residues 1528 to 1591 (PPLAEPPKPP…SSRGNLPPLV (64 aa)) are disordered. The homeobox 1 DNA-binding region spans 1595 to 1654 (RRFSRTKFTEFQTQALQSFFETSAYPKDGEVERLASLLGLASRVVVVWFQNARQKARKNA). Residues 1670–1696 (SGCRRCHATFSCVFELVRHLKKCYDDQ) form a C2H2-type 9; degenerate zinc finger. The segment covering 1696–1724 (QTLEEEEEEAERGEEEEEVEEEEVEEEQG) has biased composition (acidic residues). Disordered stretches follow at residues 1696-1769 (QTLE…SPAH), 1820-1860 (AATS…DKRL), 1912-2065 (ERKG…GMGQ), 2268-2327 (VQTA…NDAL), and 2398-2431 (NALL…EAGE). Pro residues predominate over residues 1728–1738 (PAGPEGPLPEP). The C2H2-type 10 zinc-finger motif lies at 1769-1791 (HTCDQCAISFSSQDLLTSHRRLH). Positions 1857 to 1916 (DKRLRTTILPEQLEILYRWYMQDSNPTRKMLDCISEEVGLKKRVVQVWFQNTRARERKGQ) form a DNA-binding region, homeobox 2. Residues 1925 to 1939 (PSPAVKPPATATPAS) show a composition bias toward low complexity. Positions 1949-1963 (KVDDGTGREAPKREA) are enriched in basic and acidic residues. Residues 1991 to 2004 (TPEPPLPLLPPPPP) are compositionally biased toward pro residues. Positions 2017–2044 (SPESEACSLSAGDLSDSSASSLAEPESP) are enriched in low complexity. The span at 2045–2061 (GAGGTSGGPGGGTGVPD) shows a compositional bias: gly residues. Positions 2065 to 2124 (QRRYRTQMSSLQLKIMKACYEAYRTPTMQECEVLGEEIGLPKRVIQVWFQNARAKEKKAK) form a DNA-binding region, homeobox 3. Polar residues predominate over residues 2284–2293 (DQTNTSTAGT). Basic and acidic residues predominate over residues 2305–2315 (LGDKVSSERKP). A compositionally biased stretch (pro residues) spans 2402–2422 (QPPPQPPEPTATAPPKPPELP). A C2H2-type 11; degenerate zinc finger spans residues 2451–2471 (YLCRQCKMAFDGEAPATAHQR). The segment at 2495 to 2519 (YHCLACEVLLSGREALASHLRSSAH) adopts a C2H2-type 12 zinc-finger fold. Residues 2551–2572 (EARLPHTDSNPKTTTTSTLLAL) form a disordered region. Low complexity predominate over residues 2563-2572 (TTTTSTLLAL).

The protein localises to the nucleus. Functionally, transcriptional regulator that is critical for the regulation of pain perception and processing of noxious stimuli. This Homo sapiens (Human) protein is Zinc finger homeobox protein 2 (ZFHX2).